We begin with the raw amino-acid sequence, 542 residues long: MFS thioclapurine efflux transporter tcpA (542 aa).

A compositionally biased stretch (basic and acidic residues) spans 1–10 (MATVGTEEKN). Positions 1–24 (MATVGTEEKNPIGSASNTAEPNVT) are disordered. Positions 13-24 (GSASNTAEPNVT) are enriched in polar residues. Asparagine 22 carries an N-linked (GlcNAc...) asparagine glycan. The next 3 helical transmembrane spans lie at 32–52 (SGFK…LCGL), 75–97 (GWYT…KLYT), and 103–123 (MILL…AAAP). A glycan (N-linked (GlcNAc...) asparagine) is linked at asparagine 124. Helical transmembrane passes span 133–153 (AIAG…LVHA), 161–181 (ALLG…PFIG), 193–213 (CFII…FFVF), 234–254 (IPEI…LQWG), 265–285 (IIAL…LQVL), and 307–327 (IFAL…PIYF). A glycan (N-linked (GlcNAc...) asparagine) is linked at asparagine 332. Residues 339–359 (GVNVMPLILGFLVMSIISGVI) form a helical membrane-spanning segment. Asparagine 361 carries an N-linked (GlcNAc...) asparagine glycan. Helical transmembrane passes span 370 to 390 (MFLC…FDVG), 396 to 416 (WIGY…QPIV), 427 to 447 (VPFG…IFVA), and 500 to 520 (VLGQ…LGSL).

The protein belongs to the major facilitator superfamily.

It localises to the cell membrane. In terms of biological role, MFS efflux transporter probably involved in thioclapurine export. The sequence is that of MFS thioclapurine efflux transporter tcpA from Claviceps purpurea (strain 20.1) (Ergot fungus).